A 147-amino-acid polypeptide reads, in one-letter code: Peptide methionine sulfoxide reductase MsrB (147 aa).

The region spanning 25–147 (DEYWREHLTE…NSVSLIFNKK (123 aa)) is the MsrB domain. The Zn(2+) site is built by cysteine 64, cysteine 67, cysteine 113, and cysteine 116. Cysteine 136 acts as the Nucleophile in catalysis.

This sequence belongs to the MsrB Met sulfoxide reductase family. Requires Zn(2+) as cofactor.

The catalysed reaction is L-methionyl-[protein] + [thioredoxin]-disulfide + H2O = L-methionyl-(R)-S-oxide-[protein] + [thioredoxin]-dithiol. The chain is Peptide methionine sulfoxide reductase MsrB from Vibrio cholerae serotype O1 (strain ATCC 39541 / Classical Ogawa 395 / O395).